The sequence spans 359 residues: Putative nucleotidyltransferase MAB21L1 (359 aa).

A ribonucleoside 5'-triphosphate is bound by residues R23–K24 and F63–L66. Residues E73 and E75 each contribute to the Mg(2+) site. Residues K248 and S252 to K255 each bind a ribonucleoside 5'-triphosphate.

It belongs to the mab-21 family. In terms of assembly, monomer. Homodecamer; composed of 2 back to back homopentamers. The protein may exist as monomer in solution and oiligomerizes upon ligand binding.

It is found in the nucleus. In terms of biological role, putative nucleotidyltransferase required for several aspects of embryonic development including normal development of the eye. It is unclear whether it displays nucleotidyltransferase activity in vivo. Binds single-stranded RNA (ssRNA). This Danio rerio (Zebrafish) protein is Putative nucleotidyltransferase MAB21L1 (mab21l1).